A 508-amino-acid chain; its full sequence is Photosystem II CP47 reaction center protein (508 aa).

6 helical membrane passes run 21–36 (SVHI…WAGS), 101–115 (IVFS…IWHW), 140–156 (GIHL…FGAF), 203–218 (IAAG…FHLS), 237–252 (VLSS…AFVV), and 457–472 (SFAL…HGAR).

This sequence belongs to the PsbB/PsbC family. PsbB subfamily. In terms of assembly, PSII is composed of 1 copy each of membrane proteins PsbA, PsbB, PsbC, PsbD, PsbE, PsbF, PsbH, PsbI, PsbJ, PsbK, PsbL, PsbM, PsbT, PsbX, PsbY, PsbZ, Psb30/Ycf12, at least 3 peripheral proteins of the oxygen-evolving complex and a large number of cofactors. It forms dimeric complexes. The cofactor is Binds multiple chlorophylls. PSII binds additional chlorophylls, carotenoids and specific lipids..

The protein resides in the plastid. It localises to the chloroplast thylakoid membrane. One of the components of the core complex of photosystem II (PSII). It binds chlorophyll and helps catalyze the primary light-induced photochemical processes of PSII. PSII is a light-driven water:plastoquinone oxidoreductase, using light energy to abstract electrons from H(2)O, generating O(2) and a proton gradient subsequently used for ATP formation. The polypeptide is Photosystem II CP47 reaction center protein (Gossypium barbadense (Sea Island cotton)).